A 457-amino-acid chain; its full sequence is Fibrinogen C domain-containing protein 1-B (457 aa).

The segment at 1 to 21 (MGSDRWKNIRGTPQMEDSVQE) is disordered. Topologically, residues 1-33 (MGSDRWKNIRGTPQMEDSVQEKSQRKGCGYILC) are cytoplasmic. Residues 34–54 (TVLLSVAVLLAVTVTGAVLFM) traverse the membrane as a helical; Signal-anchor for type II membrane protein segment. Residues 55–457 (NQYHAPSTEP…MKIRPQREEN (403 aa)) lie on the Extracellular side of the membrane. The 224-residue stretch at 231-454 (CANGSKPRDC…FTEMKIRPQR (224 aa)) folds into the Fibrinogen C-terminal domain. N-linked (GlcNAc...) asparagine glycosylation occurs at Asn233. Cys240 and Cys269 are joined by a disulfide. Residue Asn336 is glycosylated (N-linked (GlcNAc...) asparagine). Residues Asp389 and Asp391 each contribute to the Ca(2+) site. The cysteines at positions 397 and 410 are disulfide-linked.

In terms of assembly, homotetramer; disulfide-linked.

The protein resides in the membrane. Functionally, acetyl group-binding receptor which shows a calcium-dependent binding to acetylated structures such as chitin, some N-acetylated carbohydrates, and amino acids. The chain is Fibrinogen C domain-containing protein 1-B (fibcd1-b) from Xenopus laevis (African clawed frog).